A 339-amino-acid chain; its full sequence is DNA-directed RNA polymerase subunit alpha (339 aa).

Positions 1–233 are alpha N-terminal domain (alpha-NTD); that stretch reads MVREEVAGST…DLFLPFLHAE (233 aa). Residues 264 to 339 form an alpha C-terminal domain (alpha-CTD) region; it reads KKGIPLNCIF…IDLLKNKLSF (76 aa).

Belongs to the RNA polymerase alpha chain family. In plastids the minimal PEP RNA polymerase catalytic core is composed of four subunits: alpha, beta, beta', and beta''. When a (nuclear-encoded) sigma factor is associated with the core the holoenzyme is formed, which can initiate transcription.

The protein resides in the plastid. The protein localises to the chloroplast. It carries out the reaction RNA(n) + a ribonucleoside 5'-triphosphate = RNA(n+1) + diphosphate. Functionally, DNA-dependent RNA polymerase catalyzes the transcription of DNA into RNA using the four ribonucleoside triphosphates as substrates. This is DNA-directed RNA polymerase subunit alpha from Thinopyrum bessarabicum (Wheatgrass).